A 233-amino-acid chain; its full sequence is Small ribosomal subunit protein uS3 (233 aa).

The KH type-2 domain maps to 39–107 (VRQFLTKELS…PAQINTYEIR (69 aa)).

Belongs to the universal ribosomal protein uS3 family. Part of the 30S ribosomal subunit. Forms a tight complex with proteins S10 and S14.

Binds the lower part of the 30S subunit head. Binds mRNA in the 70S ribosome, positioning it for translation. This chain is Small ribosomal subunit protein uS3, found in Hamiltonella defensa subsp. Acyrthosiphon pisum (strain 5AT).